A 115-amino-acid chain; its full sequence is Cell division topological specificity factor (115 aa).

The disordered stretch occupies residues 93–115; the sequence is QLKEPKNQSELDSPETEGTDQKS. Positions 104–115 are enriched in acidic residues; sequence DSPETEGTDQKS.

This sequence belongs to the MinE family.

Functionally, prevents the cell division inhibition by proteins MinC and MinD at internal division sites while permitting inhibition at polar sites. This ensures cell division at the proper site by restricting the formation of a division septum at the midpoint of the long axis of the cell. The sequence is that of Cell division topological specificity factor from Prochlorococcus marinus (strain NATL1A).